The chain runs to 506 residues: Cobyric acid synthase (506 aa).

Residues 251–448 (DITIAIVQLP…LHGLFDSDAF (198 aa)) enclose the GATase cobBQ-type domain. Catalysis depends on cysteine 332, which acts as the Nucleophile. The active site involves histidine 440.

This sequence belongs to the CobB/CobQ family. CobQ subfamily.

The protein operates within cofactor biosynthesis; adenosylcobalamin biosynthesis. Functionally, catalyzes amidations at positions B, D, E, and G on adenosylcobyrinic A,C-diamide. NH(2) groups are provided by glutamine, and one molecule of ATP is hydrogenolyzed for each amidation. The protein is Cobyric acid synthase of Salmonella agona (strain SL483).